The following is a 701-amino-acid chain: Elongation factor G (701 aa).

A tr-type G domain is found at 8 to 290 (ERYRNIGISA…AVVDYLPAPT (283 aa)). Residues 17 to 24 (AHIDAGKT), 88 to 92 (DTPGH), and 142 to 145 (NKMD) contribute to the GTP site.

The protein belongs to the TRAFAC class translation factor GTPase superfamily. Classic translation factor GTPase family. EF-G/EF-2 subfamily.

The protein resides in the cytoplasm. In terms of biological role, catalyzes the GTP-dependent ribosomal translocation step during translation elongation. During this step, the ribosome changes from the pre-translocational (PRE) to the post-translocational (POST) state as the newly formed A-site-bound peptidyl-tRNA and P-site-bound deacylated tRNA move to the P and E sites, respectively. Catalyzes the coordinated movement of the two tRNA molecules, the mRNA and conformational changes in the ribosome. The sequence is that of Elongation factor G from Aeromonas salmonicida (strain A449).